A 140-amino-acid chain; its full sequence is Oleosin Cor a 13 (140 aa).

2 helical membrane passes run 31 to 51 (GSLL…LTLA) and 75 to 95 (GFLA…WIYR).

Belongs to the oleosin family. In terms of tissue distribution, expressed in seeds.

Its subcellular location is the lipid droplet. It is found in the membrane. May have a structural role to stabilize the lipid body during desiccation of the seed by preventing coalescence of the oil. Probably interacts with both lipid and phospholipid moieties of lipid bodies. May also provide recognition signals for specific lipase anchorage in lipolysis during seedling growth. The protein is Oleosin Cor a 13 of Corylus avellana (European hazel).